Reading from the N-terminus, the 279-residue chain is Shikimate dehydrogenase (NADP(+)) (279 aa).

Residues 21–23 (SKS) and T68 contribute to the shikimate site. K72 (proton acceptor) is an active-site residue. Residue E84 participates in NADP(+) binding. Shikimate contacts are provided by N93 and D109. Residues 133-137 (GAGGA), 157-162 (NRTQAK), and M220 contribute to the NADP(+) site. Shikimate is bound at residue Y222. G244 is a binding site for NADP(+).

It belongs to the shikimate dehydrogenase family. Homodimer.

The enzyme catalyses shikimate + NADP(+) = 3-dehydroshikimate + NADPH + H(+). It functions in the pathway metabolic intermediate biosynthesis; chorismate biosynthesis; chorismate from D-erythrose 4-phosphate and phosphoenolpyruvate: step 4/7. Involved in the biosynthesis of the chorismate, which leads to the biosynthesis of aromatic amino acids. Catalyzes the reversible NADPH linked reduction of 3-dehydroshikimate (DHSA) to yield shikimate (SA). In Shewanella halifaxensis (strain HAW-EB4), this protein is Shikimate dehydrogenase (NADP(+)).